Here is a 290-residue protein sequence, read N- to C-terminus: Phosphate import ATP-binding protein PstB (290 aa).

Residues 25 to 285 (LEARNLDFYY…PKTRRARDYL (261 aa)) enclose the ABC transporter domain. Residue 57 to 64 (GPSGCGKS) coordinates ATP.

Belongs to the ABC transporter superfamily. Phosphate importer (TC 3.A.1.7) family. In terms of assembly, the complex is composed of two ATP-binding proteins (PstB), two transmembrane proteins (PstC and PstA) and a solute-binding protein (PstS).

The protein resides in the cell inner membrane. The catalysed reaction is phosphate(out) + ATP + H2O = ADP + 2 phosphate(in) + H(+). Part of the ABC transporter complex PstSACB involved in phosphate import. Responsible for energy coupling to the transport system. The polypeptide is Phosphate import ATP-binding protein PstB (Zymomonas mobilis subsp. mobilis (strain ATCC 31821 / ZM4 / CP4)).